A 294-amino-acid polypeptide reads, in one-letter code: 4-hydroxy-tetrahydrodipicolinate synthase (294 aa).

A pyruvate-binding site is contributed by Thr-47. Tyr-135 acts as the Proton donor/acceptor in catalysis. Lys-163 acts as the Schiff-base intermediate with substrate in catalysis. Ile-206 serves as a coordination point for pyruvate.

It belongs to the DapA family. In terms of assembly, homodimer.

It is found in the cytoplasm. It catalyses the reaction L-aspartate 4-semialdehyde + pyruvate = (2S,4S)-4-hydroxy-2,3,4,5-tetrahydrodipicolinate + H2O + H(+). It functions in the pathway amino-acid biosynthesis; L-lysine biosynthesis via DAP pathway; (S)-tetrahydrodipicolinate from L-aspartate: step 3/4. Functionally, catalyzes the condensation of (S)-aspartate-beta-semialdehyde [(S)-ASA] and pyruvate to 4-hydroxy-tetrahydrodipicolinate (HTPA). This chain is 4-hydroxy-tetrahydrodipicolinate synthase, found in Staphylococcus haemolyticus (strain JCSC1435).